A 264-amino-acid polypeptide reads, in one-letter code: Small ribosomal subunit protein uS3 (264 aa).

The region spanning 39-107 (VRDFLKKKLK…PVHVNIEEIR (69 aa)) is the KH type-2 domain. The disordered stretch occupies residues 211-264 (NDAPVVEEPQDDRRRRPGRPEGRRREGEGRPGGNRRGGAGAGRRAAPGDAKSGE). Positions 221 to 239 (DDRRRRPGRPEGRRREGEG) are enriched in basic and acidic residues. The span at 240–251 (RPGGNRRGGAGA) shows a compositional bias: gly residues.

It belongs to the universal ribosomal protein uS3 family. As to quaternary structure, part of the 30S ribosomal subunit. Forms a tight complex with proteins S10 and S14.

Binds the lower part of the 30S subunit head. Binds mRNA in the 70S ribosome, positioning it for translation. The polypeptide is Small ribosomal subunit protein uS3 (Cupriavidus pinatubonensis (strain JMP 134 / LMG 1197) (Cupriavidus necator (strain JMP 134))).